Here is a 37-residue protein sequence, read N- to C-terminus: Small ribosomal subunit protein uS19 (37 aa).

Belongs to the universal ribosomal protein uS19 family.

The polypeptide is Small ribosomal subunit protein uS19 (RPS15) (Helix lucorum (Snail)).